Here is a 302-residue protein sequence, read N- to C-terminus: Nucleotide-binding protein Bcenmc03_2806 (302 aa).

An ATP-binding site is contributed by 8 to 15 (GISGSGKS). Residue 57-60 (DARS) participates in GTP binding.

Belongs to the RapZ-like family.

Functionally, displays ATPase and GTPase activities. The chain is Nucleotide-binding protein Bcenmc03_2806 from Burkholderia orbicola (strain MC0-3).